Reading from the N-terminus, the 357-residue chain is Histidinol-phosphate aminotransferase (357 aa).

The residue at position 221 (K221) is an N6-(pyridoxal phosphate)lysine.

Belongs to the class-II pyridoxal-phosphate-dependent aminotransferase family. Histidinol-phosphate aminotransferase subfamily. Pyridoxal 5'-phosphate is required as a cofactor.

It carries out the reaction L-histidinol phosphate + 2-oxoglutarate = 3-(imidazol-4-yl)-2-oxopropyl phosphate + L-glutamate. It functions in the pathway amino-acid biosynthesis; L-histidine biosynthesis; L-histidine from 5-phospho-alpha-D-ribose 1-diphosphate: step 7/9. The polypeptide is Histidinol-phosphate aminotransferase (hisC) (Sulfurisphaera tokodaii (strain DSM 16993 / JCM 10545 / NBRC 100140 / 7) (Sulfolobus tokodaii)).